The chain runs to 218 residues: MTQVASTNSPLLHAEQLSSIRGGRVLFENLDFSVSAGQLWQVSGPNGAGKSSLLRILTGLLEPSDGVVSFDGQPLNQNWSEYCQQLLFIGHKAAVKGELSALENFHWQQQLSSVQDVDAWDLLEKLGLLGLEDELTTRLSAGQQRRVALTRLWATQASLWILDEPFTALDVQGIALLQQRFVEHLDAGGTIIFTSHQSLTLSGLTPEKLSLEYRGEVL.

The region spanning 12-217 (LHAEQLSSIR…KLSLEYRGEV (206 aa)) is the ABC transporter domain. 44–51 (GPNGAGKS) provides a ligand contact to ATP.

It belongs to the ABC transporter superfamily. CcmA exporter (TC 3.A.1.107) family. In terms of assembly, the complex is composed of two ATP-binding proteins (CcmA) and two transmembrane proteins (CcmB).

Its subcellular location is the cell inner membrane. The catalysed reaction is heme b(in) + ATP + H2O = heme b(out) + ADP + phosphate + H(+). Its function is as follows. Part of the ABC transporter complex CcmAB involved in the biogenesis of c-type cytochromes; once thought to export heme, this seems not to be the case, but its exact role is uncertain. Responsible for energy coupling to the transport system. The polypeptide is Cytochrome c biogenesis ATP-binding export protein CcmA (Idiomarina loihiensis (strain ATCC BAA-735 / DSM 15497 / L2-TR)).